A 271-amino-acid chain; its full sequence is 3-methyl-2-oxobutanoate hydroxymethyltransferase (271 aa).

Mg(2+) is bound by residues Asp51 and Asp90. Residues 51 to 52 (DS), Asp90, and Lys119 each bind 3-methyl-2-oxobutanoate. Glu121 is a binding site for Mg(2+). The active-site Proton acceptor is Glu188.

It belongs to the PanB family. As to quaternary structure, homodecamer; pentamer of dimers. It depends on Mg(2+) as a cofactor.

It is found in the cytoplasm. The catalysed reaction is 3-methyl-2-oxobutanoate + (6R)-5,10-methylene-5,6,7,8-tetrahydrofolate + H2O = 2-dehydropantoate + (6S)-5,6,7,8-tetrahydrofolate. It functions in the pathway cofactor biosynthesis; (R)-pantothenate biosynthesis; (R)-pantoate from 3-methyl-2-oxobutanoate: step 1/2. Catalyzes the reversible reaction in which hydroxymethyl group from 5,10-methylenetetrahydrofolate is transferred onto alpha-ketoisovalerate to form ketopantoate. This chain is 3-methyl-2-oxobutanoate hydroxymethyltransferase, found in Aromatoleum aromaticum (strain DSM 19018 / LMG 30748 / EbN1) (Azoarcus sp. (strain EbN1)).